The following is a 413-amino-acid chain: 1-acylglycerol-3-phosphate O-acyltransferase Pnpla3 (413 aa).

The Cytoplasmic segment spans residues Met-1–Thr-42. One can recognise a PNPLA domain in the interval Leu-10 to Lys-179. The GXGXXG motif lies at Gly-14–Gly-19. The chain crosses the membrane as a helical; Signal-anchor for type II membrane protein span at residues Phe-43–Gly-63. Positions Gly-45–Gly-49 match the GXSXG motif. Ser-47 acts as the Nucleophile in catalysis. Topologically, residues Arg-64–Leu-413 are lumenal. The active-site Proton acceptor is Asp-166. Residues Asp-166–Gly-168 carry the DGA/G motif. Residues Asn-206 and Asn-209 are each glycosylated (N-linked (GlcNAc...) asparagine). The disordered stretch occupies residues Lys-389–Leu-413. Residues Met-394 to Pro-403 are compositionally biased toward basic residues.

As to expression, restricted to adipose tissue. Expressed in inguinal and epididymal white adipose tissues and in interscapular brown adipose tissue. Also expressed in liver in response to high-sucrose diet.

It localises to the membrane. The protein localises to the lipid droplet. The enzyme catalyses a 1-acyl-sn-glycero-3-phosphate + an acyl-CoA = a 1,2-diacyl-sn-glycero-3-phosphate + CoA. It catalyses the reaction a triacylglycerol + H2O = a diacylglycerol + a fatty acid + H(+). The catalysed reaction is a 1-acylglycerol + a 1,3-diacylglycerol = a triacylglycerol + glycerol. It carries out the reaction a 1-acylglycerol + a 1,2-diacylglycerol = a triacylglycerol + glycerol. The enzyme catalyses 2 a 1-acylglycerol = a 1,2-diacylglycerol + glycerol. It catalyses the reaction 1-(9Z-octadecenoyl)-sn-glycero-3-phosphate + (9Z)-octadecenoyl-CoA = 1,2-di-(9Z-octadecenoyl)-sn-glycero-3-phosphate + CoA. The catalysed reaction is 1-(9Z-octadecenoyl)-sn-glycero-3-phosphate + hexadecanoyl-CoA = 1-(9Z)-octadecenoyl-2-hexadecanoyl-sn-glycero-3-phosphate + CoA. It carries out the reaction 1-(9Z-octadecenoyl)-sn-glycero-3-phosphate + (9Z,12Z)-octadecadienoyl-CoA = 1-(9Z)-octadecenoyl-2-(9Z,12Z)-octadecadienoyl-sn-glycero-3-phosphate + CoA. The enzyme catalyses 1-(9Z-octadecenoyl)-sn-glycero-3-phosphate + (5Z,8Z,11Z,14Z)-eicosatetraenoyl-CoA = 1-(9Z)-octadecenoyl-2-(5Z,8Z,11Z,14Z)-eicosatetraenoyl-sn-glycero-3-phosphate + CoA. It catalyses the reaction 2 1-(9Z-octadecenoyl)-glycerol = 1,2-di-(9Z-octadecenoyl)-glycerol + glycerol. The catalysed reaction is 1-(9Z-octadecenoyl)-glycerol + 1,2-di-(9Z-octadecenoyl)-glycerol = 1,2,3-tri-(9Z-octadecenoyl)-glycerol + glycerol. It carries out the reaction 1-(9Z-octadecenoyl)-glycerol + 1,3-di-(9Z-octadecenoyl)-glycerol = 1,2,3-tri-(9Z-octadecenoyl)-glycerol + glycerol. The enzyme catalyses 1,2,3-tri-(9Z-octadecenoyl)-glycerol + H2O = 1,3-di-(9Z-octadecenoyl)-glycerol + (9Z)-octadecenoate + H(+). It catalyses the reaction a 1,2-diacyl-sn-glycero-3-phosphocholine + H2O = a 1-acyl-sn-glycero-3-phosphocholine + a fatty acid + H(+). The protein operates within phospholipid metabolism. It functions in the pathway glycerolipid metabolism. Functionally, specifically catalyzes coenzyme A (CoA)-dependent acylation of 1-acyl-sn-glycerol 3-phosphate (2-lysophosphatidic acid/LPA) to generate phosphatidic acid (PA), an important metabolic intermediate and precursor for both triglycerides and glycerophospholipids. Does not esterify other lysophospholipids. Acyl donors are long chain (at least C16) fatty acyl-CoAs: arachidonoyl-CoA, linoleoyl-CoA, oleoyl-CoA and at a lesser extent palmitoyl-CoA. Additionally possesses low triacylglycerol lipase and CoA-independent acylglycerol transacylase activities and thus may play a role in acyl-chain remodeling of triglycerides. In vitro may express hydrolytic activity against glycerolipids triacylglycerol, diacylglycerol and monoacylglycerol, with a strong preference for oleic acid as the acyl moiety. However, the triacylglycerol hydrolase activity is controversial and may be very low. Possesses phospholipase A2 activity. This Mus musculus (Mouse) protein is 1-acylglycerol-3-phosphate O-acyltransferase Pnpla3.